A 285-amino-acid chain; its full sequence is Shikimate dehydrogenase (NADP(+)) (285 aa).

Shikimate is bound by residues 22–24 (SRS) and Thr71. Residue Lys75 is the Proton acceptor of the active site. Shikimate-binding residues include Asn96 and Asp111. NADP(+) contacts are provided by residues 136–140 (GAGGA), 160–165 (NRTVGR), and Ile225. Residue Tyr227 coordinates shikimate. An NADP(+)-binding site is contributed by Gly248.

The protein belongs to the shikimate dehydrogenase family. In terms of assembly, homodimer.

It catalyses the reaction shikimate + NADP(+) = 3-dehydroshikimate + NADPH + H(+). It functions in the pathway metabolic intermediate biosynthesis; chorismate biosynthesis; chorismate from D-erythrose 4-phosphate and phosphoenolpyruvate: step 4/7. Its function is as follows. Involved in the biosynthesis of the chorismate, which leads to the biosynthesis of aromatic amino acids. Catalyzes the reversible NADPH linked reduction of 3-dehydroshikimate (DHSA) to yield shikimate (SA). This is Shikimate dehydrogenase (NADP(+)) from Rhizobium etli (strain CIAT 652).